The primary structure comprises 687 residues: E3 ubiquitin-protein ligase RNF19B (687 aa).

The segment at Met1–Cys294 is required for ubiquitin ligase activity and for protection against staurosporin-induced cell death. Residues Arg53 to Gly88 are disordered. Residues Pro60–Ser85 are compositionally biased toward pro residues. The tract at residues Ser91–Gly313 is TRIAD supradomain. Cys95, Cys98, Cys118, Cys121, Cys182, Cys187, Cys204, Cys209, Cys214, Cys217, His222, Cys227, Cys263, and Cys266 together coordinate Zn(2+). An RING-type 1 zinc finger spans residues Cys95–Glu144. Residues Thr161–Cys227 form an IBR-type zinc finger. The RING-type 2; atypical zinc finger occupies Cys263 to Cys294. Residue Cys278 is part of the active site. Residues Cys283, Cys286, Cys291, Cys294, His302, and Cys309 each coordinate Zn(2+). The next 2 helical transmembrane spans lie at Leu330–Ile350 and Val391–Val411. Positions Ser618–Arg662 are disordered. A compositionally biased stretch (acidic residues) spans Gln629–Tyr641.

It belongs to the RBR family. RNF19 subfamily. Interacts with UBE2L3, UBE2L6 and UCKL1.

The protein localises to the cytoplasmic granule membrane. It localises to the endoplasmic reticulum membrane. The catalysed reaction is [E2 ubiquitin-conjugating enzyme]-S-ubiquitinyl-L-cysteine + [acceptor protein]-L-lysine = [E2 ubiquitin-conjugating enzyme]-L-cysteine + [acceptor protein]-N(6)-ubiquitinyl-L-lysine.. It participates in protein modification; protein ubiquitination. E3 ubiquitin-protein ligase which accepts ubiquitin from E2 ubiquitin-conjugating enzymes UBE2L3 and UBE2L6 in the form of a thioester and then directly transfers the ubiquitin to targeted substrates, such as UCKL1. Involved in the cytolytic activity of natural killer cells and cytotoxic T-cells. Protects against staurosporin-induced cell death. The polypeptide is E3 ubiquitin-protein ligase RNF19B (rnf19b) (Xenopus laevis (African clawed frog)).